An 87-amino-acid polypeptide reads, in one-letter code: Putative acyl-CoA-binding protein (87 aa).

An ACB domain is found at 1 to 86 (MSSTFEQAAA…VDELKTKYGM (86 aa)). Residues K13, 28–32 (YALFK), K50, K54, and Y73 contribute to the an acyl-CoA site.

Belongs to the ACBP family.

It is found in the cytoplasm. It localises to the nucleus. Its function is as follows. Binds medium- and long-chain acyl-CoA esters with very high affinity and may function as an intracellular carrier of acyl-CoA esters. May enhance the activity of the ceramide synthase complex. The chain is Putative acyl-CoA-binding protein from Schizosaccharomyces pombe (strain 972 / ATCC 24843) (Fission yeast).